Here is a 589-residue protein sequence, read N- to C-terminus: Class I diterpene synthase 2, chloroplastic (589 aa).

Mg(2+) is bound by residues Asp-328, Asp-332, Asn-472, Thr-476, and Glu-480. The DDXXD motif signature appears at 328–332 (DDFFD).

This sequence belongs to the terpene synthase family. Requires Mg(2+) as cofactor. In terms of tissue distribution, mostly expressed in trichomes of leaves and fruits.

It localises to the plastid. The protein localises to the chloroplast. The catalysed reaction is 9alpha-copalyl diphosphate + H2O = (13S)-vitexifolin A + diphosphate. It carries out the reaction peregrinol diphosphate = (13R)-9,13-epoxylabd-14-ene + diphosphate. The enzyme catalyses peregrinol diphosphate + H2O = viteagnusin D + diphosphate. It functions in the pathway secondary metabolite biosynthesis; terpenoid biosynthesis. Involved in the biosynthesis of labdane-type diterpenoid including cleroda-dienols, and peregrinol lactones and furan derivatives, dopaminergic diterpenoids that can bind to dopamine receptors in the human pituitary gland, have probably ability to lower prolactin levels, and are used to treat menstrual cycle disorders (e.g. premenstrual syndrome and mastodynia). Terpene synthase the catalyzes the conversion of peregrinol diphosphate to viteagnusin D and 9,13(R)-epoxy-labd-14-ene, and of syn-copalyl diphosophate to vitexifolin A. The sequence is that of Class I diterpene synthase 2, chloroplastic from Vitex agnus-castus (Chaste tree).